Here is a 177-residue protein sequence, read N- to C-terminus: uncharacterized protein (177 aa).

A signal peptide spans 1 to 22 (MCGVVVVIVALVPADPLLPAFA). The next 3 membrane-spanning stretches (helical) occupy residues 31-51 (VFIPFFNISSSIILICSTCVF), 94-114 (ISLMPSFLFPFATLLCLLKFV), and 136-156 (LFPIMLIPPPFLTSSSFLLEI).

Its subcellular location is the membrane. This is an uncharacterized protein from Saccharomyces cerevisiae (strain ATCC 204508 / S288c) (Baker's yeast).